Consider the following 338-residue polypeptide: MKIYYDKDCNQSVLKGKRVAVIGYGSQGHAHANNLKDSGVDVVVGLKADSSSVAKATGAGLTVLPTADAVKGADVVMILLPDEIQGDVYREEVGPYLKQGAYLAFGHGFNIHFGQITPRPDINVIMAAPKGPGHLVRHEYTRGGGVPCLIAIHHDPSGNSRDVALAYASAIGGGRAGIIETSFKEETETDLFGEQAVLCGGISALIQAGFETLVEAGYSPEMAYFECLHETKLIVDLIYEGGIANMRYSISNTAEYGDLTRGPRVITDETKKEMKQILWEIQSGQFAKEWMLENKANKPTFNALRRKGMEHPIEDVGARLRSMMSWIGSSKIVDKSKN.

The KARI N-terminal Rossmann domain maps to 1–181 (MKIYYDKDCN…GGGRAGIIET (181 aa)). NADP(+) contacts are provided by residues 24–27 (YGSQ), lysine 47, serine 50, serine 52, and 82–85 (DEIQ). The active site involves histidine 107. Glycine 133 is an NADP(+) binding site. A KARI C-terminal knotted domain is found at 182–327 (SFKEETETDL…ARLRSMMSWI (146 aa)). Aspartate 190, glutamate 194, glutamate 226, and glutamate 230 together coordinate Mg(2+). Position 251 (serine 251) interacts with substrate.

Belongs to the ketol-acid reductoisomerase family. Mg(2+) serves as cofactor.

The catalysed reaction is (2R)-2,3-dihydroxy-3-methylbutanoate + NADP(+) = (2S)-2-acetolactate + NADPH + H(+). It carries out the reaction (2R,3R)-2,3-dihydroxy-3-methylpentanoate + NADP(+) = (S)-2-ethyl-2-hydroxy-3-oxobutanoate + NADPH + H(+). The protein operates within amino-acid biosynthesis; L-isoleucine biosynthesis; L-isoleucine from 2-oxobutanoate: step 2/4. Its pathway is amino-acid biosynthesis; L-valine biosynthesis; L-valine from pyruvate: step 2/4. Its function is as follows. Involved in the biosynthesis of branched-chain amino acids (BCAA). Catalyzes an alkyl-migration followed by a ketol-acid reduction of (S)-2-acetolactate (S2AL) to yield (R)-2,3-dihydroxy-isovalerate. In the isomerase reaction, S2AL is rearranged via a Mg-dependent methyl migration to produce 3-hydroxy-3-methyl-2-ketobutyrate (HMKB). In the reductase reaction, this 2-ketoacid undergoes a metal-dependent reduction by NADPH to yield (R)-2,3-dihydroxy-isovalerate. The sequence is that of Ketol-acid reductoisomerase (NADP(+)) from Geobacter sulfurreducens (strain ATCC 51573 / DSM 12127 / PCA).